Here is a 140-residue protein sequence, read N- to C-terminus: Fatty acid-binding protein 12 (140 aa).

Residues Arg-107 and 127-129 each bind a fatty acid; that span reads RTY.

Belongs to the calycin superfamily. Fatty-acid binding protein (FABP) family. As to expression, expressed in a number of retinoblastoma cell lines.

May play a role in lipid transport. The chain is Fatty acid-binding protein 12 (FABP12) from Homo sapiens (Human).